The primary structure comprises 144 residues: Large ribosomal subunit protein uL15 (144 aa).

The disordered stretch occupies residues 1 to 53 (MRLNTLSPAQGAKQAPKRVGRGIGSGLGKTGGRGHKGQNSRTGGGVRRGFEGG). Residues 21-31 (RGIGSGLGKTG) show a composition bias toward gly residues.

It belongs to the universal ribosomal protein uL15 family. Part of the 50S ribosomal subunit.

Functionally, binds to the 23S rRNA. The chain is Large ribosomal subunit protein uL15 from Hamiltonella defensa subsp. Acyrthosiphon pisum (strain 5AT).